Reading from the N-terminus, the 460-residue chain is MHLARELGVNLADQRLAQALDEADPLAHLRQEFSIPQMKDIKQADLKLVEAESDCIYLCGNSLGLMPKRTRTIVNEELDTWATGGVTGHFPDGPGKRPWVSIDETVTDKCARVVGALPEEVAIMNTLTVNLHLLMVSLAHTMARQVPFYRPTSDRFKILVEAKAFPSDHFAVLSQLRMHGHDESALIEVKPREGEHNIREEDLLAILEEQGDSIATVLVGGVHYYTGQFFDLQRLCAAAHNKGCTFGVDLAHAVGNVPLQLHDWDIDFACWCTYKYLNSGPGGIAGAFIHKKHEGTSRPYLQGWWGVQLNERFRMDHDASFMPGVRGLQLSNPGVLQTVALLGSLEIYEQTDMASLRAKSLKLTAYLEQLMQALVNEEGHAPRFEIITPTDPERRGCQLSILFKVDIDAAFEALEKRGVVCDVRRPDVMRIAPVPLYNTFTDVYRFVTTLRDALNASASS.

Pyridoxal 5'-phosphate contacts are provided by residues Leu127, Thr128, 165 to 168, Asp249, His252, and Tyr274; that span reads FPSD. Lys275 bears the N6-(pyridoxal phosphate)lysine mark. Pyridoxal 5'-phosphate contacts are provided by Trp304 and Asn332.

The protein belongs to the kynureninase family. As to quaternary structure, homodimer. It depends on pyridoxal 5'-phosphate as a cofactor.

It localises to the cytoplasm. The enzyme catalyses L-kynurenine + H2O = anthranilate + L-alanine + H(+). The catalysed reaction is 3-hydroxy-L-kynurenine + H2O = 3-hydroxyanthranilate + L-alanine + H(+). The protein operates within amino-acid degradation; L-kynurenine degradation; L-alanine and anthranilate from L-kynurenine: step 1/1. It functions in the pathway cofactor biosynthesis; NAD(+) biosynthesis; quinolinate from L-kynurenine: step 2/3. Its function is as follows. Catalyzes the cleavage of L-kynurenine (L-Kyn) and L-3-hydroxykynurenine (L-3OHKyn) into anthranilic acid (AA) and 3-hydroxyanthranilic acid (3-OHAA), respectively. The sequence is that of Kynureninase from Monosiga brevicollis (Choanoflagellate).